Consider the following 509-residue polypeptide: Probable aspartic-type endopeptidase CTSD (509 aa).

The signal sequence occupies residues 1–21 (MQFLWLCLLSAVTLQFTGTLA). Positions 102–408 (YFSEVKVGSE…DFDKNRVGLA (307 aa)) constitute a Peptidase A1 domain. Asp120 is a catalytic residue. Asn174 carries an N-linked (GlcNAc...) asparagine glycan. The active site involves Asp302. An N-linked (GlcNAc...) asparagine glycan is attached at Asn361. The disordered stretch occupies residues 451–489 (NKAPSGGSPGLPAESGSDSTTNGEATNGATSSPNSSSSV). Over residues 466-480 (GSDSTTNGEATNGAT) the composition is skewed to polar residues. Asn484 is a glycosylation site (N-linked (GlcNAc...) asparagine). Ser485 is lipidated: GPI-anchor amidated serine. Residues 486–509 (SSSVLTPTWLTLAVFFAIGSSLWS) constitute a propeptide, removed in mature form.

This sequence belongs to the peptidase A1 family.

The protein localises to the cell membrane. Functionally, probable GPI-anchored aspartic-type endopeptidase which contributes to virulence. The chain is Probable aspartic-type endopeptidase CTSD (CTSD) from Trichophyton verrucosum (strain HKI 0517).